Here is a 210-residue protein sequence, read N- to C-terminus: Leucyl/phenylalanyl-tRNA--protein transferase (210 aa).

The protein belongs to the L/F-transferase family.

Its subcellular location is the cytoplasm. It carries out the reaction N-terminal L-lysyl-[protein] + L-leucyl-tRNA(Leu) = N-terminal L-leucyl-L-lysyl-[protein] + tRNA(Leu) + H(+). The catalysed reaction is N-terminal L-arginyl-[protein] + L-leucyl-tRNA(Leu) = N-terminal L-leucyl-L-arginyl-[protein] + tRNA(Leu) + H(+). The enzyme catalyses L-phenylalanyl-tRNA(Phe) + an N-terminal L-alpha-aminoacyl-[protein] = an N-terminal L-phenylalanyl-L-alpha-aminoacyl-[protein] + tRNA(Phe). Functions in the N-end rule pathway of protein degradation where it conjugates Leu, Phe and, less efficiently, Met from aminoacyl-tRNAs to the N-termini of proteins containing an N-terminal arginine or lysine. The sequence is that of Leucyl/phenylalanyl-tRNA--protein transferase from Ruegeria pomeroyi (strain ATCC 700808 / DSM 15171 / DSS-3) (Silicibacter pomeroyi).